The primary structure comprises 870 residues: Importin subunit beta-1 (870 aa).

Ala-2 bears the N-acetylalanine mark. HEAT repeat units lie at residues 4 to 33 (EVTQ…FQEQ), 35 to 67 (LAGF…KNAL), 87 to 126 (MSTK…ELPQ), 132 to 161 (LIVS…LCEE), 172 to 204 (VNKI…YMAL), 214 to 249 (DMER…IAST), 255 to 304 (AHYM…EFAG), 313 to 361 (FTKQ…RAVG), 365 to 395 (VPHV…GSIL), 403 to 440 (LMAI…IFEF), 456 to 492 (CQQI…EDIG), 498 to 535 (TPFF…EVVR), 542 to 588 (STMV…QVII), 596 to 637 (TKSK…AYAA), 642 to 679 (AKYM…CRAL), 684 to 722 (LPYC…ALAI), 730 to 776 (WRYS…FQGF), and 826 to 868 (SHVG…TRAI). One can recognise an Importin N-terminal domain in the interval 23–103 (AEESLKQFQE…RAFLLKTLSA (81 aa)).

This sequence belongs to the importin beta family. Importin beta-1 subfamily. In terms of assembly, forms a complex with the importin subunits alpha IMPA1 or IMPA2, the nucleoporin NUP62 and the Ran-GTP-binding proteins RAN1, RAN2 or RAN3. In terms of tissue distribution, expressed in roots, cotyledons, leaves, stems, petals, stamen, stigma, siliques, embryos and guard cells.

It is found in the cytoplasm. The protein resides in the nucleus. Its function is as follows. Acts as a negative effector of drought tolerance. Involved in the regulation of stomatal closure and in the abscisic acid (ABA)-mediated pathway that lead to drought tolerance. Does not directly mediate nuclear import of ABI1 and ABI2 which are key regulators of the ABA signaling pathway. May be involved in nuclear translocation of other type 2C protein phosphatases that mediate ABA signaling. The protein is Importin subunit beta-1 of Arabidopsis thaliana (Mouse-ear cress).